The following is a 455-amino-acid chain: T-box protein VegT-A (455 aa).

3 disordered regions span residues 21 to 40 (SNCA…SSQD), 229 to 262 (REQE…DSPE), and 295 to 346 (ANQG…EPSS). A DNA-binding region (T-box) is located at residues 57–230 (LWSQFHQEGT…HNPFAKGFRE (174 aa)). Basic and acidic residues predominate over residues 229 to 241 (REQERSHKRDDVL). Residues 308–324 (GANQEQQVPTSSSNFYN) are compositionally biased toward polar residues.

Forms a repression complex on the promoters of the nodal/nr1 and siamois genes with the maternal factors tcf7l1/tcf3 and pouf5.1/oct-25. Interacts (via C-terminus) with tcf7l1/tcf3 (via N-terminus). Also interacts with the other POU-domain transcription factors pou5f1.2/oct-91 and pou5f1.3/oct-60. In terms of tissue distribution, uniformly distributed in stage I oocytes but becomes localized to the vegetal hemisphere by stage II and remains so thereafter throughout oogenesis and the early embryonic cleavage stages. Zygotic expression parallels blastopore formation and shifts from dorsal expression in the marginal zone of late blastula and early gastrula stages to a ventral/lateral expression at the posterior end of later stage embryos. Expression is excluded from the notochord. In tailbud and tadpole stages, expressed exclusively in a subset of posterior Rohon-Beard neurons.

The protein resides in the nucleus. Functionally, transcription factor required for both mesoderm and endoderm formation in the embryo; signaling determinants and concentration levels may determine which germ layer is formed. Acts together with beta-catenin to activate genes that are responsible for mesoderm induction including wnt-8, eomes t/bra, siamois, mix1 and sox17. Directly binds to promoter DNA. Patterns the mesoderm along the dorsoventral and posterior axis. Activates siamois gene transcription when alone or in combination with beta-catenin, but inhibits siamois transcription in combination with pou5f1.1/oct-25. The protein is T-box protein VegT-A (vegt-a) of Xenopus laevis (African clawed frog).